Reading from the N-terminus, the 127-residue chain is Large ribosomal subunit protein eL18 (127 aa).

This sequence belongs to the eukaryotic ribosomal protein eL18 family.

In Methanopyrus kandleri (strain AV19 / DSM 6324 / JCM 9639 / NBRC 100938), this protein is Large ribosomal subunit protein eL18.